Consider the following 537-residue polypeptide: Probable feruloyl esterase ARB_07085 (537 aa).

Positions 1 to 22 (MVTLPLLLSILPLAAVFSSAAS) are cleaved as a signal peptide. Asn-67, Asn-76, and Asn-189 each carry an N-linked (GlcNAc...) asparagine glycan. 3 disulfide bridges follow: Cys-196-Cys-459, Cys-263-Cys-280, and Cys-508-Cys-529. Ser-197 functions as the Acyl-ester intermediate in the catalytic mechanism. Asp-264, Asp-267, Val-269, Asp-271, and Val-273 together coordinate Ca(2+). The N-linked (GlcNAc...) asparagine glycan is linked to Asn-339. Active-site charge relay system residues include Asp-419 and His-458.

This sequence belongs to the tannase family.

Its subcellular location is the secreted. The catalysed reaction is feruloyl-polysaccharide + H2O = ferulate + polysaccharide.. Functionally, hydrolyzes the feruloyl-arabinose ester bond in arabinoxylans as well as the feruloyl-galactose and feruloyl-arabinose ester bonds. This is Probable feruloyl esterase ARB_07085 from Arthroderma benhamiae (strain ATCC MYA-4681 / CBS 112371) (Trichophyton mentagrophytes).